An 86-amino-acid polypeptide reads, in one-letter code: uncharacterized protein (86 aa).

2 consecutive 4Fe-4S ferredoxin-type domains span residues 1–29 (MALL…IGDE) and 31–65 (YVID…PDPE). C9, C12, C15, C19, C38, C41, C50, and C54 together coordinate [4Fe-4S] cluster.

It depends on [4Fe-4S] cluster as a cofactor.

This is an uncharacterized protein from Haemophilus influenzae (strain ATCC 51907 / DSM 11121 / KW20 / Rd).